The chain runs to 202 residues: Alpha-1-acid glycoprotein (202 aa).

A signal peptide spans 1–18 (MALLWALAVLSHLPLLDA). N-linked (GlcNAc...) asparagine glycans are attached at residues Asn-34, Asn-57, Asn-94, Asn-104, and Asn-136. An intrachain disulfide couples Cys-91 to Cys-184.

Belongs to the calycin superfamily. Lipocalin family.

The protein resides in the secreted. Functions as a transport protein in the blood stream. Binds various ligands in the interior of its beta-barrel domain. Appears to function in modulating the activity of the immune system during the acute-phase reaction. The protein is Alpha-1-acid glycoprotein (ORM1) of Bos taurus (Bovine).